A 514-amino-acid chain; its full sequence is 2,3-bisphosphoglycerate-independent phosphoglycerate mutase (514 aa).

Positions 14 and 64 each coordinate Mn(2+). Serine 64 acts as the Phosphoserine intermediate in catalysis. Residues histidine 125, 155–156 (RD), arginine 187, arginine 193, 263–266 (RADR), and lysine 336 contribute to the substrate site. Mn(2+) contacts are provided by aspartate 403, histidine 407, aspartate 444, histidine 445, and histidine 463.

The protein belongs to the BPG-independent phosphoglycerate mutase family. Monomer. Mn(2+) serves as cofactor.

It catalyses the reaction (2R)-2-phosphoglycerate = (2R)-3-phosphoglycerate. Its pathway is carbohydrate degradation; glycolysis; pyruvate from D-glyceraldehyde 3-phosphate: step 3/5. Its function is as follows. Catalyzes the interconversion of 2-phosphoglycerate and 3-phosphoglycerate. This chain is 2,3-bisphosphoglycerate-independent phosphoglycerate mutase, found in Shewanella oneidensis (strain ATCC 700550 / JCM 31522 / CIP 106686 / LMG 19005 / NCIMB 14063 / MR-1).